Reading from the N-terminus, the 417-residue chain is Serine hydroxymethyltransferase (417 aa).

Residues leucine 121 and 125-127 (GHL) each bind (6S)-5,6,7,8-tetrahydrofolate. Lysine 229 is subject to N6-(pyridoxal phosphate)lysine. Position 355 to 357 (355 to 357 (SPF)) interacts with (6S)-5,6,7,8-tetrahydrofolate.

The protein belongs to the SHMT family. As to quaternary structure, homodimer. The cofactor is pyridoxal 5'-phosphate.

The protein resides in the cytoplasm. It catalyses the reaction (6R)-5,10-methylene-5,6,7,8-tetrahydrofolate + glycine + H2O = (6S)-5,6,7,8-tetrahydrofolate + L-serine. The protein operates within one-carbon metabolism; tetrahydrofolate interconversion. It functions in the pathway amino-acid biosynthesis; glycine biosynthesis; glycine from L-serine: step 1/1. Its function is as follows. Catalyzes the reversible interconversion of serine and glycine with tetrahydrofolate (THF) serving as the one-carbon carrier. This reaction serves as the major source of one-carbon groups required for the biosynthesis of purines, thymidylate, methionine, and other important biomolecules. Also exhibits THF-independent aldolase activity toward beta-hydroxyamino acids, producing glycine and aldehydes, via a retro-aldol mechanism. The sequence is that of Serine hydroxymethyltransferase from Xanthomonas oryzae pv. oryzae (strain MAFF 311018).